Consider the following 201-residue polypeptide: Recombination protein RecR (201 aa).

The segment at 60-75 adopts a C4-type zinc-finger fold; that stretch reads CKYCQSLTEKDVCDIC. The Toprim domain occupies 83 to 177; the sequence is SKLCIIESML…KISRIGFGVP (95 aa).

The protein belongs to the RecR family.

Functionally, may play a role in DNA repair. It seems to be involved in an RecBC-independent recombinational process of DNA repair. It may act with RecF and RecO. In Francisella philomiragia subsp. philomiragia (strain ATCC 25017 / CCUG 19701 / FSC 153 / O#319-036), this protein is Recombination protein RecR.